Here is a 347-residue protein sequence, read N- to C-terminus: Protein RecA (347 aa).

67–74 (GPESSGKT) is a binding site for ATP.

Belongs to the RecA family.

It localises to the cytoplasm. Can catalyze the hydrolysis of ATP in the presence of single-stranded DNA, the ATP-dependent uptake of single-stranded DNA by duplex DNA, and the ATP-dependent hybridization of homologous single-stranded DNAs. It interacts with LexA causing its activation and leading to its autocatalytic cleavage. The sequence is that of Protein RecA from Helicobacter pylori (strain P12).